A 283-amino-acid polypeptide reads, in one-letter code: Hydroxyacylglutathione hydrolase-like protein (283 aa).

Zn(2+)-binding residues include histidine 54, histidine 56, aspartate 58, histidine 59, histidine 110, aspartate 134, and histidine 173.

The protein belongs to the metallo-beta-lactamase superfamily. Glyoxalase II family. Zn(2+) is required as a cofactor.

Functionally, hydrolase acting on ester bonds. The protein is Hydroxyacylglutathione hydrolase-like protein (Haghl) of Mus musculus (Mouse).